Here is a 308-residue protein sequence, read N- to C-terminus: METQNLTVVTEFILLGLTQSQDAQLLVFVLVLIFYLIILPGNFLIIFTIKSDPGLTAPLYFFLGNLALLDASYSFIVVPRMLVDFLSEKKVISYRSCITQLFFLHFLGAGEMFLLVVMAFDRYIAICRPLHYSTIMNPRACYALSLVLWLGGFIHSIVQVALILHLPFCGPNQLDNFFCDVPQVIKLACTNTFVVELLMVSNSGLLSLLCFLGLLASYAVILCRIREHSSEGKSKAISTCTTHIIIIFLMFGPAIFIYTCPFQAFPADKVVSLFHTVIFPLMNPVIYTLRNQEVKASMRKLLSQHMFC.

Residues 1–25 (METQNLTVVTEFILLGLTQSQDAQL) are Extracellular-facing. N-linked (GlcNAc...) asparagine glycosylation occurs at asparagine 5. The helical transmembrane segment at 26 to 49 (LVFVLVLIFYLIILPGNFLIIFTI) threads the bilayer. At 50-57 (KSDPGLTA) the chain is on the cytoplasmic side. The helical transmembrane segment at 58-79 (PLYFFLGNLALLDASYSFIVVP) threads the bilayer. Residues 80–100 (RMLVDFLSEKKVISYRSCITQ) lie on the Extracellular side of the membrane. The cysteines at positions 97 and 189 are disulfide-linked. A helical transmembrane segment spans residues 101 to 120 (LFFLHFLGAGEMFLLVVMAF). Over 121-139 (DRYIAICRPLHYSTIMNPR) the chain is Cytoplasmic. The helical transmembrane segment at 140–158 (ACYALSLVLWLGGFIHSIV) threads the bilayer. Topologically, residues 159–195 (QVALILHLPFCGPNQLDNFFCDVPQVIKLACTNTFVV) are extracellular. The chain crosses the membrane as a helical span at residues 196–219 (ELLMVSNSGLLSLLCFLGLLASYA). Over 220–235 (VILCRIREHSSEGKSK) the chain is Cytoplasmic. Residues 236 to 258 (AISTCTTHIIIIFLMFGPAIFIY) traverse the membrane as a helical segment. The Extracellular segment spans residues 259–269 (TCPFQAFPADK). The helical transmembrane segment at 270-289 (VVSLFHTVIFPLMNPVIYTL) threads the bilayer. Residues 290 to 308 (RNQEVKASMRKLLSQHMFC) lie on the Cytoplasmic side of the membrane.

Belongs to the G-protein coupled receptor 1 family.

The protein resides in the cell membrane. Functionally, odorant receptor. The sequence is that of Olfactory receptor 4N5 (OR4N5) from Homo sapiens (Human).